A 179-amino-acid chain; its full sequence is Acireductone dioxygenase (179 aa).

4 residues coordinate Fe(2+): histidine 88, histidine 90, glutamate 94, and histidine 133. Ni(2+) is bound by residues histidine 88, histidine 90, glutamate 94, and histidine 133.

This sequence belongs to the acireductone dioxygenase (ARD) family. As to quaternary structure, monomer. Interacts with MMP14. Fe(2+) is required as a cofactor. Requires Ni(2+) as cofactor.

Its subcellular location is the cytoplasm. It is found in the nucleus. The protein resides in the cell membrane. The enzyme catalyses 1,2-dihydroxy-5-(methylsulfanyl)pent-1-en-3-one + O2 = 4-methylsulfanyl-2-oxobutanoate + formate + 2 H(+). It catalyses the reaction 1,2-dihydroxy-5-(methylsulfanyl)pent-1-en-3-one + O2 = 3-(methylsulfanyl)propanoate + CO + formate + 2 H(+). Its pathway is amino-acid biosynthesis; L-methionine biosynthesis via salvage pathway; L-methionine from S-methyl-5-thio-alpha-D-ribose 1-phosphate: step 5/6. In terms of biological role, catalyzes 2 different reactions between oxygen and the acireductone 1,2-dihydroxy-3-keto-5-methylthiopentene (DHK-MTPene) depending upon the metal bound in the active site. Fe-containing acireductone dioxygenase (Fe-ARD) produces formate and 2-keto-4-methylthiobutyrate (KMTB), the alpha-ketoacid precursor of methionine in the methionine recycle pathway. Ni-containing acireductone dioxygenase (Ni-ARD) produces methylthiopropionate, carbon monoxide and formate, and does not lie on the methionine recycle pathway. The protein is Acireductone dioxygenase (adi1) of Xenopus laevis (African clawed frog).